A 387-amino-acid polypeptide reads, in one-letter code: S-adenosylmethionine synthase (387 aa).

Histidine 16 serves as a coordination point for ATP. Aspartate 18 lines the Mg(2+) pocket. Glutamate 44 is a binding site for K(+). Glutamate 57 and glutamine 100 together coordinate L-methionine. The segment at 100 to 110 (QSPDIAQGVDE) is flexible loop. Residues 167–169 (DAK), 232–233 (RF), aspartate 241, 247–248 (RK), alanine 264, and lysine 268 each bind ATP. Aspartate 241 is an L-methionine binding site. Lysine 272 is an L-methionine binding site.

The protein belongs to the AdoMet synthase family. Homotetramer; dimer of dimers. It depends on Mg(2+) as a cofactor. Requires K(+) as cofactor.

Its subcellular location is the cytoplasm. It carries out the reaction L-methionine + ATP + H2O = S-adenosyl-L-methionine + phosphate + diphosphate. Its pathway is amino-acid biosynthesis; S-adenosyl-L-methionine biosynthesis; S-adenosyl-L-methionine from L-methionine: step 1/1. In terms of biological role, catalyzes the formation of S-adenosylmethionine (AdoMet) from methionine and ATP. The overall synthetic reaction is composed of two sequential steps, AdoMet formation and the subsequent tripolyphosphate hydrolysis which occurs prior to release of AdoMet from the enzyme. In Janthinobacterium sp. (strain Marseille) (Minibacterium massiliensis), this protein is S-adenosylmethionine synthase.